Here is a 175-residue protein sequence, read N- to C-terminus: Orotate phosphoribosyltransferase (175 aa).

Residues arginine 89, lysine 90, lysine 93, and 115–123 (EDIATTGQS) each bind 5-phospho-alpha-D-ribose 1-diphosphate. Residues threonine 119 and arginine 147 each contribute to the orotate site.

Belongs to the purine/pyrimidine phosphoribosyltransferase family. PyrE subfamily. Homodimer. Mg(2+) serves as cofactor.

The catalysed reaction is orotidine 5'-phosphate + diphosphate = orotate + 5-phospho-alpha-D-ribose 1-diphosphate. The protein operates within pyrimidine metabolism; UMP biosynthesis via de novo pathway; UMP from orotate: step 1/2. In terms of biological role, catalyzes the transfer of a ribosyl phosphate group from 5-phosphoribose 1-diphosphate to orotate, leading to the formation of orotidine monophosphate (OMP). The chain is Orotate phosphoribosyltransferase from Halobacterium salinarum (strain ATCC 700922 / JCM 11081 / NRC-1) (Halobacterium halobium).